The following is a 425-amino-acid chain: MLDLKRIRTDFDTVAAKLKNRGVSEDTLTHLKELDEKRRTLLVQSEELKAGRNIASAAIAQAKRQKEDATQQIADMQKVSADIKTIDNQLVAIDQQVADIITVLPNTPHDSVPVGADEEDNVEIRRWGTPRDFDFEVKAHWDLGEDLDILDWERGAKVTGARFLFYKNLGARLERALYNFMLDEHIKEGYQEIITPYMVNHDSMFGTGQYPKFKEDTFELADTNFVLIPTAEVPLTNYYRGEILDGKELPIYFTAMSPSFRSEAGSAGRDTRGLIRLHQFHKVEMVKFAKPEESYQELEKMTANAENILQKLGLPYRVISLCTGDMGFSAAKTYDLEVWIPAQNTYREISSCSNTEDFQARRAQIRYRDEADGKVKLLHTLNGSGLAVGRTVAAILENYQNEDGSVTIPEVLRPYMGGETVISPK.

Position 230-232 (230-232) interacts with L-serine; sequence TAE. 261–263 contacts ATP; the sequence is RSE. Glutamate 284 is an L-serine binding site. ATP is bound at residue 348-351; sequence EISS. Serine 384 is a binding site for L-serine.

This sequence belongs to the class-II aminoacyl-tRNA synthetase family. Type-1 seryl-tRNA synthetase subfamily. As to quaternary structure, homodimer. The tRNA molecule binds across the dimer.

The protein localises to the cytoplasm. The catalysed reaction is tRNA(Ser) + L-serine + ATP = L-seryl-tRNA(Ser) + AMP + diphosphate + H(+). The enzyme catalyses tRNA(Sec) + L-serine + ATP = L-seryl-tRNA(Sec) + AMP + diphosphate + H(+). It participates in aminoacyl-tRNA biosynthesis; selenocysteinyl-tRNA(Sec) biosynthesis; L-seryl-tRNA(Sec) from L-serine and tRNA(Sec): step 1/1. Its function is as follows. Catalyzes the attachment of serine to tRNA(Ser). Is also able to aminoacylate tRNA(Sec) with serine, to form the misacylated tRNA L-seryl-tRNA(Sec), which will be further converted into selenocysteinyl-tRNA(Sec). The chain is Serine--tRNA ligase from Streptococcus pyogenes serotype M3 (strain SSI-1).